Consider the following 316-residue polypeptide: 4-hydroxy-3-methylbut-2-enyl diphosphate reductase (316 aa).

Residue cysteine 12 coordinates [4Fe-4S] cluster. Residues histidine 41 and histidine 74 each coordinate (2E)-4-hydroxy-3-methylbut-2-enyl diphosphate. Dimethylallyl diphosphate is bound by residues histidine 41 and histidine 74. Isopentenyl diphosphate contacts are provided by histidine 41 and histidine 74. Cysteine 96 is a [4Fe-4S] cluster binding site. Residue histidine 124 coordinates (2E)-4-hydroxy-3-methylbut-2-enyl diphosphate. Histidine 124 is a binding site for dimethylallyl diphosphate. Isopentenyl diphosphate is bound at residue histidine 124. Glutamate 126 (proton donor) is an active-site residue. Position 169 (threonine 169) interacts with (2E)-4-hydroxy-3-methylbut-2-enyl diphosphate. Cysteine 199 lines the [4Fe-4S] cluster pocket. (2E)-4-hydroxy-3-methylbut-2-enyl diphosphate is bound by residues serine 227, serine 228, asparagine 229, and serine 271. Residues serine 227, serine 228, asparagine 229, and serine 271 each contribute to the dimethylallyl diphosphate site. 4 residues coordinate isopentenyl diphosphate: serine 227, serine 228, asparagine 229, and serine 271.

Belongs to the IspH family. [4Fe-4S] cluster serves as cofactor.

It catalyses the reaction isopentenyl diphosphate + 2 oxidized [2Fe-2S]-[ferredoxin] + H2O = (2E)-4-hydroxy-3-methylbut-2-enyl diphosphate + 2 reduced [2Fe-2S]-[ferredoxin] + 2 H(+). The enzyme catalyses dimethylallyl diphosphate + 2 oxidized [2Fe-2S]-[ferredoxin] + H2O = (2E)-4-hydroxy-3-methylbut-2-enyl diphosphate + 2 reduced [2Fe-2S]-[ferredoxin] + 2 H(+). Its pathway is isoprenoid biosynthesis; dimethylallyl diphosphate biosynthesis; dimethylallyl diphosphate from (2E)-4-hydroxy-3-methylbutenyl diphosphate: step 1/1. The protein operates within isoprenoid biosynthesis; isopentenyl diphosphate biosynthesis via DXP pathway; isopentenyl diphosphate from 1-deoxy-D-xylulose 5-phosphate: step 6/6. Catalyzes the conversion of 1-hydroxy-2-methyl-2-(E)-butenyl 4-diphosphate (HMBPP) into a mixture of isopentenyl diphosphate (IPP) and dimethylallyl diphosphate (DMAPP). Acts in the terminal step of the DOXP/MEP pathway for isoprenoid precursor biosynthesis. The chain is 4-hydroxy-3-methylbut-2-enyl diphosphate reductase from Xylella fastidiosa (strain M12).